Reading from the N-terminus, the 321-residue chain is GTP 3',8-cyclase (321 aa).

Residues Ser5–Glu233 form the Radical SAM core domain. Arg14 provides a ligand contact to GTP. [4Fe-4S] cluster-binding residues include Cys21 and Cys25. Tyr27 contacts S-adenosyl-L-methionine. Cys28 serves as a coordination point for [4Fe-4S] cluster. Arg64 is a GTP binding site. Gly68 lines the S-adenosyl-L-methionine pocket. Ser95 lines the GTP pocket. Ser119 contacts S-adenosyl-L-methionine. GTP is bound at residue Lys155. Met189 contributes to the S-adenosyl-L-methionine binding site. [4Fe-4S] cluster contacts are provided by Cys249 and Cys252. Arg254 to Arg256 is a binding site for GTP. A [4Fe-4S] cluster-binding site is contributed by Cys266.

The protein belongs to the radical SAM superfamily. MoaA family. As to quaternary structure, monomer and homodimer. Requires [4Fe-4S] cluster as cofactor.

It carries out the reaction GTP + AH2 + S-adenosyl-L-methionine = (8S)-3',8-cyclo-7,8-dihydroguanosine 5'-triphosphate + 5'-deoxyadenosine + L-methionine + A + H(+). The protein operates within cofactor biosynthesis; molybdopterin biosynthesis. Catalyzes the cyclization of GTP to (8S)-3',8-cyclo-7,8-dihydroguanosine 5'-triphosphate. This chain is GTP 3',8-cyclase, found in Helicobacter pylori (strain ATCC 700392 / 26695) (Campylobacter pylori).